A 218-amino-acid polypeptide reads, in one-letter code: Histidine biosynthesis bifunctional protein HisIE (218 aa).

Residues 1–118 form a phosphoribosyl-AMP cyclohydrolase region; the sequence is MTDLSELNFD…DAPDTGLDGT (118 aa). Residues 119–218 form a phosphoribosyl-ATP pyrophosphohydrolase region; sequence LERVYATITE…SGLKGPKEVG (100 aa).

It in the N-terminal section; belongs to the PRA-CH family. This sequence in the C-terminal section; belongs to the PRA-PH family.

The protein localises to the cytoplasm. The enzyme catalyses 1-(5-phospho-beta-D-ribosyl)-ATP + H2O = 1-(5-phospho-beta-D-ribosyl)-5'-AMP + diphosphate + H(+). It carries out the reaction 1-(5-phospho-beta-D-ribosyl)-5'-AMP + H2O = 1-(5-phospho-beta-D-ribosyl)-5-[(5-phospho-beta-D-ribosylamino)methylideneamino]imidazole-4-carboxamide. It participates in amino-acid biosynthesis; L-histidine biosynthesis; L-histidine from 5-phospho-alpha-D-ribose 1-diphosphate: step 2/9. Its pathway is amino-acid biosynthesis; L-histidine biosynthesis; L-histidine from 5-phospho-alpha-D-ribose 1-diphosphate: step 3/9. The protein is Histidine biosynthesis bifunctional protein HisIE (hisI) of Deinococcus radiodurans (strain ATCC 13939 / DSM 20539 / JCM 16871 / CCUG 27074 / LMG 4051 / NBRC 15346 / NCIMB 9279 / VKM B-1422 / R1).